A 413-amino-acid polypeptide reads, in one-letter code: Cell division protein FtsZ 2 (413 aa).

Residues 130 to 132 (GTG), Glu169, Arg173, and Asp216 contribute to the GTP site.

It belongs to the FtsZ family. As to quaternary structure, homodimer. Polymerizes to form a dynamic ring structure in a strictly GTP-dependent manner. Interacts directly with several other division proteins.

It is found in the cytoplasm. Essential cell division protein that forms a contractile ring structure (Z ring) at the future cell division site. The regulation of the ring assembly controls the timing and the location of cell division. One of the functions of the FtsZ ring is to recruit other cell division proteins to the septum to produce a new cell wall between the dividing cells. Binds GTP and shows GTPase activity. The chain is Cell division protein FtsZ 2 from Pyrococcus abyssi (strain GE5 / Orsay).